The following is a 147-amino-acid chain: MVRLTDSEKAEVVSLWSKVDEKIIGSEALGRLLVIYPWTQRFFEHFGDLSTADAIMKNPRVQAHGEKVLSSFGEGLNHLGDLKGTFAQLSELHCDELHVDPENFKLLGNILVVVLARHYGKEFTLEVQAAYQKFVAGMANALAHKYH.

In terms of domain architecture, Globin spans 3 to 147 (RLTDSEKAEV…MANALAHKYH (145 aa)). Heme b is bound by residues His64 and His93.

Belongs to the globin family. Heterotetramer of two delta chains and two alpha chains. Red blood cells.

This is Hemoglobin subunit deltaH (HBD) from Dendrohyrax dorsalis (Beecroft's tree hyrax).